A 240-amino-acid chain; its full sequence is Phosphoribosylaminoimidazole-succinocarboxamide synthase (240 aa).

It belongs to the SAICAR synthetase family.

The catalysed reaction is 5-amino-1-(5-phospho-D-ribosyl)imidazole-4-carboxylate + L-aspartate + ATP = (2S)-2-[5-amino-1-(5-phospho-beta-D-ribosyl)imidazole-4-carboxamido]succinate + ADP + phosphate + 2 H(+). The protein operates within purine metabolism; IMP biosynthesis via de novo pathway; 5-amino-1-(5-phospho-D-ribosyl)imidazole-4-carboxamide from 5-amino-1-(5-phospho-D-ribosyl)imidazole-4-carboxylate: step 1/2. This is Phosphoribosylaminoimidazole-succinocarboxamide synthase from Coxiella burnetii (strain RSA 493 / Nine Mile phase I).